A 368-amino-acid chain; its full sequence is DNA replication and repair protein RecF (368 aa).

G30–T37 contributes to the ATP binding site.

The protein belongs to the RecF family.

The protein resides in the cytoplasm. In terms of biological role, the RecF protein is involved in DNA metabolism; it is required for DNA replication and normal SOS inducibility. RecF binds preferentially to single-stranded, linear DNA. It also seems to bind ATP. This is DNA replication and repair protein RecF from Xanthomonas axonopodis pv. citri (strain 306).